The chain runs to 380 residues: Putative 8-amino-7-oxononanoate synthase (380 aa).

Arg18 is a binding site for substrate. 106–107 (GY) serves as a coordination point for pyridoxal 5'-phosphate. His131 serves as a coordination point for substrate. Residues Ser179, 205 to 208 (DEAH), and 236 to 239 (TFGK) contribute to the pyridoxal 5'-phosphate site. N6-(pyridoxal phosphate)lysine is present on Lys239. Thr352 contributes to the substrate binding site.

This sequence belongs to the class-II pyridoxal-phosphate-dependent aminotransferase family. BioF subfamily. In terms of assembly, homodimer. Pyridoxal 5'-phosphate is required as a cofactor.

The catalysed reaction is 6-carboxyhexanoyl-[ACP] + L-alanine + H(+) = (8S)-8-amino-7-oxononanoate + holo-[ACP] + CO2. Its pathway is cofactor biosynthesis; biotin biosynthesis. Its function is as follows. Catalyzes the decarboxylative condensation of pimeloyl-[acyl-carrier protein] and L-alanine to produce 8-amino-7-oxononanoate (AON), [acyl-carrier protein], and carbon dioxide. This Haemophilus influenzae (strain ATCC 51907 / DSM 11121 / KW20 / Rd) protein is Putative 8-amino-7-oxononanoate synthase (bioF).